The chain runs to 600 residues: Elongation factor 4 (600 aa).

The tr-type G domain occupies 5 to 187 (KYIRNFSIIA…AIVSKLPPPK (183 aa)). GTP-binding positions include 17 to 22 (DHGKST) and 134 to 137 (NKLD).

It belongs to the TRAFAC class translation factor GTPase superfamily. Classic translation factor GTPase family. LepA subfamily.

It localises to the cell inner membrane. The catalysed reaction is GTP + H2O = GDP + phosphate + H(+). Its function is as follows. Required for accurate and efficient protein synthesis under certain stress conditions. May act as a fidelity factor of the translation reaction, by catalyzing a one-codon backward translocation of tRNAs on improperly translocated ribosomes. Back-translocation proceeds from a post-translocation (POST) complex to a pre-translocation (PRE) complex, thus giving elongation factor G a second chance to translocate the tRNAs correctly. Binds to ribosomes in a GTP-dependent manner. This Rickettsia rickettsii (strain Iowa) protein is Elongation factor 4.